The following is a 120-amino-acid chain: Large ribosomal subunit protein eL34z (120 aa).

The disordered stretch occupies residues valine 31–isoleucine 51.

It belongs to the eukaryotic ribosomal protein eL34 family.

This chain is Large ribosomal subunit protein eL34z (RPL34A), found in Arabidopsis thaliana (Mouse-ear cress).